A 404-amino-acid chain; its full sequence is Zinc metalloprotease Rip1 (404 aa).

A helical membrane pass occupies residues 1 to 21 (MMFVTGIVLFALAILISVALH). Position 21 (H21) interacts with Zn(2+). E22 is an active-site residue. H25 contacts Zn(2+). The chain crosses the membrane as a helical span at residues 104-124 (PGMNLAICLVLIYAIALVWGL). Residues 121 to 203 (VWGLPNLHPP…SVPIVVERDG (83 aa)) form the PDZ domain. A Zn(2+)-binding site is contributed by D202. Transmembrane regions (helical) follow at residues 313-333 (LWVAFWFFLAQLNLILAAINL) and 373-393 (LLPATYVVLVLVVGYMLLTVT).

This sequence belongs to the peptidase M50B family. The cofactor is Zn(2+).

The protein resides in the cell membrane. A probable site-2 protease (S2P) that cleaves type-2 transmembrane proteins within their membrane-spanning domains. Degrades anti-sigma factors RskA, RslA and RsmA, releasing sigma factors SigK, SigL and SigM from the cellular membrane, activating signaling pathways. Does not act on RsdA. Regulates the composition of extractable mycolic acids in the cell envelope in response to changes in membrane fluidity. Mediates transcriptional regulation of mycolic acid biosynthetic genes in response to detergent. Probably also cleaves PbpB (PBP3, FtsI); this cleavage is inhibited by Wag31-PbpBI interaction. Its function is as follows. Regulated intramembrane proteolysis (RIP) occurs when an extracytoplasmic signal (possibly oxidative stress) triggers a concerted proteolytic cascade to transmit information and elicit cellular responses. The membrane-spanning regulatory substrate protein (includes anti-sigma factors RskA, RslA, RsmA, and PbpB) is first cut extracytoplasmically (site-1 protease, S1P), then within the membrane itself (site-2 protease, S2P, this entry), while cytoplasmic proteases finish degrading the regulatory protein, liberating the effector protein (ECF sigma factors SigK, SigL and SigM). The polypeptide is Zinc metalloprotease Rip1 (rip1) (Mycobacterium tuberculosis (strain ATCC 35801 / TMC 107 / Erdman)).